Reading from the N-terminus, the 143-residue chain is MGFGKSSPFLAFSILVLCQAGSLQATPLRSALETLPDPGALSEKEGRLLLAALVKAYVQRKTNELEQEEEQEETEDSSLDSSRAKRCSNLSTCVLSAYWKDLNNYHRYSGMGFGPETPGKKRDIANSLEKDLSSHFGVPTDAN.

Residues 1–25 (MGFGKSSPFLAFSILVLCQAGSLQA) form the signal peptide. Positions 26 to 84 (TPLRSALETLPDPGALSEKEGRLLLAALVKAYVQRKTNELEQEEEQEETEDSSLDSSRA) are excised as a propeptide. S42 bears the Phosphoserine mark. The tract at residues 62–86 (TNELEQEEEQEETEDSSLDSSRAKR) is disordered. Positions 65-78 (LEQEEEQEETEDSS) are enriched in acidic residues. An intrachain disulfide couples C87 to C93. Residues 112 to 143 (GFGPETPGKKRDIANSLEKDLSSHFGVPTDAN) are disordered. At P118 the chain carries Proline amide. The span at 118 to 133 (PGKKRDIANSLEKDLS) shows a compositional bias: basic and acidic residues. A propeptide spanning residues 122–143 (RDIANSLEKDLSSHFGVPTDAN) is cleaved from the precursor.

The protein belongs to the calcitonin family.

It localises to the secreted. Functionally, calcitonin is a peptide hormone that causes a rapid but short-lived drop in the level of calcium and phosphate in blood by promoting the incorporation of those ions in the bones. Calcitonin function is mediated by the calcitonin receptor/CALCR and the CALCR-RAMP2 (AMYR2) receptor complex. This Ovis aries (Sheep) protein is Calcitonin (CALCA).